We begin with the raw amino-acid sequence, 131 residues long: Glycine cleavage system H protein (131 aa).

Positions 24 to 106 constitute a Lipoyl-binding domain; the sequence is RVTVGISDHA…YGEGWMFVVE (83 aa). Lys-65 carries the post-translational modification N6-lipoyllysine.

It belongs to the GcvH family. The glycine cleavage system is composed of four proteins: P, T, L and H. The cofactor is (R)-lipoate.

In terms of biological role, the glycine cleavage system catalyzes the degradation of glycine. The H protein shuttles the methylamine group of glycine from the P protein to the T protein. The protein is Glycine cleavage system H protein of Stenotrophomonas maltophilia (strain K279a).